The sequence spans 702 residues: Solute carrier organic anion transporter family member 1B3 (702 aa).

The Cytoplasmic segment spans residues 1–28; sequence MDQHQHLNKTAESASSEKKKTRRCNGFK. A helical membrane pass occupies residues 29–48; it reads MFLAALSFSYIAKALGGIIM. Over 49 to 67 the chain is Extracellular; that stretch reads KISITQIERRFDISSSLAG. Residues 68–88 traverse the membrane as a helical segment; it reads LIDGSFEIGNLLVIVFVSYFG. At 89–94 the chain is on the cytoplasmic side; that stretch reads SKLHRP. A helical transmembrane segment spans residues 95-119; it reads KLIGIGCLLMGTGSILTSLPHFFMG. The Extracellular portion of the chain corresponds to 120–168; the sequence is YYRYSKETHINPSENSTSSLSTCLINQTLSFNGTSPEIVEKDCVKESGS. 3 N-linked (GlcNAc...) asparagine glycosylation sites follow: Asn134, Asn145, and Asn151. A helical membrane pass occupies residues 169–197; sequence HMWIYVFMGNMLRGIGETPIVPLGISYID. At 198–216 the chain is on the cytoplasmic side; sequence DFAKEGHSSLYLGSLNAIG. The helical transmembrane segment at 217–237 threads the bilayer; sequence MIGPVIGFALGSLFAKMYVDI. Topologically, residues 238-255 are extracellular; it reads GYVDLSTIRITPKDSRWV. Residues 256-280 form a helical membrane-spanning segment; that stretch reads GAWWLGFLVSGLFSIISSIPFFFLP. At 281 to 331 the chain is on the cytoplasmic side; it reads KNPNKPQKERKISLSLHVLKTNDDRNQTANLTNQGKNVTKNVTGFFQSLKS. Ser293 and Ser295 each carry phosphoserine. Residues 332–353 form a helical membrane-spanning segment; it reads ILTNPLYVIFLLLTLLQVSSFI. Residues 354–373 are Extracellular-facing; it reads GSFTYVFKYMEQQYGQSASH. The chain crosses the membrane as a helical span at residues 374-397; it reads ANFLLGIITIPTVATGMFLGGFII. The Cytoplasmic portion of the chain corresponds to 398–401; the sequence is KKFK. A helical transmembrane segment spans residues 402–425; the sequence is LSLVGIAKFSFLTSMISFLFQLLY. Topologically, residues 426–537 are extracellular; that stretch reads FPLICESKSV…NTCTRKFFIY (112 aa). Asn445 is a glycosylation site (N-linked (GlcNAc...) asparagine). The region spanning 453-508 is the Kazal-like domain; that stretch reads DVPLSYCNSECNCDESQWEPVCGNNGITYLSPCLAGCKSSSGIKKHTVFYNCSCVE. Cystine bridges form between Cys459-Cys489, Cys465-Cys485, and Cys474-Cys506. 2 N-linked (GlcNAc...) asparagine glycosylation sites follow: Asn503 and Asn516. A helical transmembrane segment spans residues 538 to 560; that stretch reads VAIQVINSLFSATGGTTFILLTV. Residues 561–569 lie on the Cytoplasmic side of the membrane; that stretch reads KIVQPELKA. Residues 570–595 traverse the membrane as a helical segment; it reads LAMGFQSMVIRTLGGILAPIYFGALI. The Extracellular segment spans residues 596-629; that stretch reads DKTCMKWSTNSCGAQGACRIYNSVFFGRVYLGLS. A helical membrane pass occupies residues 630–647; that stretch reads IALRFPALVLYIVFIFAM. The Cytoplasmic segment spans residues 648-695; the sequence is KKKFQGKDTKASDNERKVMDEANLEFLNNGEHFVPSAGTDSKTCNLDM. Position 683 is a phosphoserine (Ser683).

It belongs to the organo anion transporter (TC 2.A.60) family. N-glycosylated. In terms of tissue distribution, highly expressed in liver, in particular at the basolateral membrane of hepatocytes near the central vein. Expressed in the placenta. In testis, primarily localized to the basal membrane of Sertoli cells and weakly expressed in Leydig cells and within the tubules.

The protein resides in the basolateral cell membrane. The protein localises to the basal cell membrane. It carries out the reaction estrone 3-sulfate(out) + hydrogencarbonate(in) = estrone 3-sulfate(in) + hydrogencarbonate(out). The enzyme catalyses 17beta-estradiol 17-O-(beta-D-glucuronate)(out) = 17beta-estradiol 17-O-(beta-D-glucuronate)(in). It catalyses the reaction taurocholate(out) = taurocholate(in). The catalysed reaction is estrone 3-sulfate(out) = estrone 3-sulfate(in). It carries out the reaction dehydroepiandrosterone 3-sulfate(out) = dehydroepiandrosterone 3-sulfate(in). The enzyme catalyses leukotriene C4(out) = leukotriene C4(in). It catalyses the reaction L-thyroxine(out) = L-thyroxine(in). The catalysed reaction is prostaglandin E2(out) = prostaglandin E2(in). It carries out the reaction (4E,15E)-bilirubin IXalpha C8-beta-D-glucuronoside(out) = (4E,15E)-bilirubin IXalpha C8-beta-D-glucuronoside(in). The enzyme catalyses bilirubin IXalpha bis-beta-D-glucuronoside(out) = bilirubin IXalpha bis-beta-D-glucuronoside(in). Its function is as follows. Mediates the Na(+)-independent uptake of organic anions. Shows broad substrate specificity, can transport both organic anions such as bile acid taurocholate (cholyltaurine) and conjugated steroids (17-beta-glucuronosyl estradiol, dehydroepiandrosterone sulfate (DHEAS), and estrone 3-sulfate), as well as eicosanoid leukotriene C4, prostaglandin E2 and L-thyroxine (T4). Hydrogencarbonate/HCO3(-) acts as the probable counteranion that exchanges for organic anions. Shows a pH-sensitive substrate specificity towards sulfated steroids, taurocholate and T4 which may be ascribed to the protonation state of the binding site and leads to a stimulation of substrate transport in an acidic microenvironment. Involved in the clearance of bile acids and organic anions from the liver. Can take up bilirubin glucuronides from plasma into the liver, contributing to the detoxification-enhancing liver-blood shuttling loop. Transports coproporphyrin I and III, by-products of heme synthesis, and may be involved in their hepatic disposition. May contribute to regulate the transport of organic compounds in testes across the blood-testis-barrier. Can transport HMG-CoA reductase inhibitors (also known as statins) such as pitavastatin, a clinically important class of hypolipidemic drugs. May play an important role in plasma and tissue distribution of the structurally diverse chemotherapeutic drugs methotrexate and paclitaxel. May also transport antihypertension agents, such as the angiotensin-converting enzyme (ACE) inhibitor prodrug enalapril, and the highly selective angiotensin II AT1-receptor antagonist valsartan, in the liver. The protein is Solute carrier organic anion transporter family member 1B3 (SLCO1B3) of Homo sapiens (Human).